Consider the following 223-residue polypeptide: Exosome complex component RRP46 (223 aa).

This sequence belongs to the RNase PH family. Component of the RNA exosome complex. Specifically part of the catalytically inactive RNA exosome core complex (Exo-9) which may associate with the catalytic subunits RRP6 and DIS3 in cytoplasmic- and nuclear-specific RNA exosome complex forms. Exo-9 is formed by a hexameric base ring of RNase PH domain-containing subunits and a cap ring consisting of CSL4, RRP4 and RRP40.

Its subcellular location is the cytoplasm. It is found in the nucleus. It localises to the nucleolus. Functionally, non-catalytic component of the RNA exosome complex which has 3'-&gt;5' exoribonuclease activity and participates in a multitude of cellular RNA processing and degradation events. In the nucleus, the RNA exosome complex is involved in proper maturation of stable RNA species such as rRNA, snRNA and snoRNA, in the elimination of RNA processing by-products and non-coding 'pervasive' transcripts, such as antisense RNA species and cryptic unstable transcripts (CUTs), and of mRNAs with processing defects, thereby limiting or excluding their export to the cytoplasm. In the cytoplasm, the RNA exosome complex is involved in general mRNA turnover and in RNA surveillance pathways, preventing translation of aberrant mRNAs. The catalytic inactive RNA exosome core complex of 9 subunits (Exo-9) is proposed to play a pivotal role in the binding and presentation of RNA for ribonucleolysis, and to serve as a scaffold for the association with catalytic subunits and accessory proteins or complexes. RRP46 is part of the hexameric ring of RNase PH domain-containing subunits proposed to form a central channel which threads RNA substrates for degradation. This Saccharomyces cerevisiae (strain ATCC 204508 / S288c) (Baker's yeast) protein is Exosome complex component RRP46 (RRP46).